The primary structure comprises 168 residues: NADH dehydrogenase [ubiquinone] 1 alpha subcomplex assembly factor 2 (168 aa).

A compositionally biased stretch (basic and acidic residues) spans 108–118 (KEKLLQEESNK). Residues 108–168 (KEKLLQEESN…MPHGDKGHSQ (61 aa)) are disordered. S133 carries the phosphoserine modification. The segment covering 144–155 (ESPTSTGKTFQP) has biased composition (polar residues).

The protein belongs to the complex I NDUFA12 subunit family. As to quaternary structure, interacts with ARMC9.

The protein resides in the mitochondrion. Functionally, acts as a molecular chaperone for mitochondrial complex I assembly. Complex I functions in the transfer of electrons from NADH to the respiratory chain. The immediate electron acceptor for the enzyme is believed to be ubiquinone. Is involved in the initial steps of cilia formation, including removal of CP110 from the mother centrioles, docking of membrane vesicles to the mother centrioles, and establishment of the transition zone. The polypeptide is NADH dehydrogenase [ubiquinone] 1 alpha subcomplex assembly factor 2 (NDUFAF2) (Bos taurus (Bovine)).